The following is a 374-amino-acid chain: Serine/threonine-protein kinase-transforming protein mos (374 aa).

The 277-residue stretch at 94–370 (VCLMHRLGSG…LLQRDLKAFR (277 aa)) folds into the Protein kinase domain. ATP is bound by residues 100–108 (LGSGGFGSV) and Lys121. Asp229 acts as the Proton acceptor in catalysis.

It belongs to the protein kinase superfamily. Ser/Thr protein kinase family.

It carries out the reaction L-seryl-[protein] + ATP = O-phospho-L-seryl-[protein] + ADP + H(+). It catalyses the reaction L-threonyl-[protein] + ATP = O-phospho-L-threonyl-[protein] + ADP + H(+). This chain is Serine/threonine-protein kinase-transforming protein mos (V-MOS), found in Mus musculus (Mouse).